The following is a 340-amino-acid chain: Fructose import permease protein FruG (340 aa).

The next 9 membrane-spanning stretches (helical) occupy residues 23-43, 49-69, 73-93, 101-121, 130-150, 182-202, 234-254, 273-293, and 307-327; these read IPTL…QALF, LGFI…AVAM, ILTG…AVVG, VPAF…GLLA, MQPF…ASII, LSFN…YVFL, IIYL…TANI, VVIG…SVLG, and FGVP…VFVV.

Belongs to the binding-protein-dependent transport system permease family. The complex is composed of an ATP-binding protein (FruK), two transmembrane proteins (FruF and FruG) and a solute-binding protein (FruE).

Its subcellular location is the cell membrane. Part of the high-affinity ABC transporter complex FruEKFG involved in fructose uptake. Can also transport ribose and xylose, with lower affinity. Probably responsible for the translocation of the substrate across the membrane. This Bifidobacterium longum (strain NCC 2705) protein is Fructose import permease protein FruG.